A 104-amino-acid polypeptide reads, in one-letter code: Large ribosomal subunit protein uL15z (104 aa).

This sequence belongs to the universal ribosomal protein uL15 family.

This Arabidopsis thaliana (Mouse-ear cress) protein is Large ribosomal subunit protein uL15z (RPL27AA).